Consider the following 400-residue polypeptide: Argininosuccinate synthase (400 aa).

Alanine 9–serine 17 contributes to the ATP binding site. Residue tyrosine 87 coordinates L-citrulline. Glycine 117 lines the ATP pocket. Residues threonine 119, asparagine 123, and aspartate 124 each contribute to the L-aspartate site. L-citrulline is bound at residue asparagine 123. 5 residues coordinate L-citrulline: arginine 127, serine 176, serine 185, glutamate 261, and tyrosine 273.

It belongs to the argininosuccinate synthase family. Type 1 subfamily. In terms of assembly, homotetramer.

The protein localises to the cytoplasm. It carries out the reaction L-citrulline + L-aspartate + ATP = 2-(N(omega)-L-arginino)succinate + AMP + diphosphate + H(+). It functions in the pathway amino-acid biosynthesis; L-arginine biosynthesis; L-arginine from L-ornithine and carbamoyl phosphate: step 2/3. This chain is Argininosuccinate synthase, found in Chlorobium phaeobacteroides (strain DSM 266 / SMG 266 / 2430).